The following is an 847-amino-acid chain: MASPAFMRFLPRCGAAAAFGTLLGLAGCQSWLDDRYADSLPPTSGVQPIKGLAQNVSIRRNALGMPLIETGTFHDALFALGYVHASDRLSQMVSLRLLAQGRLAEMVGPGALEIDRFMRTVNLRQAAEIQYRNASPRLQRFFEVYARGVNAYLYRYRDKLPMDLAQSGYRPEYWKPEDSALVFALLNFGLAVNLQEEIASLTLAQKVGSDKLAWLTPTYPDENLPFDEAEKLKGLRLDGQVPGLAGVEGAARQVAALSMLGVAASNNWAIAPQRSRSGKSLMANDTHLPLSMPSVWNYVQIRSPKYQAAGVSIAGLPGVVAGFNGKLAWGMTMVLGDNQDLYLEQLRRQGNRLYYLADGKWQPTRERQETFFIKGQRPIREVIHETRHGPLLNSALGERKNILQPLPLKSGYGLAYRSIQQEADKTLDGFFDLSRAKTIEQAFDATREIRAMPLNIVFADEKHIGWQVTGRYPNRKEGRGLLPSPGWDGRYDWDGYADPILHPSDQDPQQGWLGTANHRTVQPGYGAQLSNSWYYPERAERIAQLAGASKSHDTQSMIRMQYDQTSLFVAKLQAMFDNPGMALPLRQAIDALPEAQRSRAREAYDRLMAFDGKLTASSSDAALYGAFLHESARQIFLDELGPEDGPAWKAFVETANLSYSAQADHLLGRDDSPFWDDTRTPQKEDKPAILARSLAAAVEFCEQRLGSERKAWQWGKLHTYEWQSDSSKMAPYLGAGERAGLGAIKGYLDRGPYPAGGDHTTLDVSAYGWGQDFDTWLIPAMRLIVDFGQSEPMIGVNSSGQSGNPASPHYADGIDAWLKGRYVSFPFQPQNLDRVYGNKRLTLTPAR.

Residues M1–A26 form the signal peptide. S265 (nucleophile) is an active-site residue.

The protein belongs to the peptidase S45 family. In terms of assembly, heterodimer of an alpha subunit and a beta subunit processed from the same precursor.

It is found in the periplasm. It carries out the reaction an N-acyl-L-homoserine lactone + H2O = L-homoserine lactone + a carboxylate. Functionally, catalyzes the deacylation of acyl-homoserine lactone (AHL or acyl-HSL), releasing homoserine lactone (HSL) and the corresponding fatty acid. Possesses a specificity for the degradation of long-chain acyl-HSLs (side chains of seven or more carbons in length). Appears to be the acyl-HSL acylase that underlies the ability of P.aeruginosa to degrade and utilize certain acyl-HSLs as growth nutrients, including one of its own quorum signals, 3-oxo-C12-HSL. Is thought to have a role in quorum quenching. This is Acyl-homoserine lactone acylase QuiP (quiP) from Pseudomonas aeruginosa (strain ATCC 15692 / DSM 22644 / CIP 104116 / JCM 14847 / LMG 12228 / 1C / PRS 101 / PAO1).